The primary structure comprises 382 residues: RNA binding protein fox-1 homolog 1 (382 aa).

Positions M1–V121 are disordered. The segment covering Q70–G87 has biased composition (polar residues). The span at T88–D99 shows a compositional bias: low complexity. The segment covering G100 to K113 has biased composition (polar residues). The region spanning K117 to A193 is the RRM domain. An Asymmetric dimethylarginine modification is found at R317. The interval M357–S382 is disordered.

As to quaternary structure, binds to the C-terminus of ATXN2.

It is found in the nucleus. It localises to the cytoplasm. In terms of biological role, RNA-binding protein that regulates alternative splicing events by binding to 5'-UGCAUGU-3' elements. Prevents binding of U2AF2 to the 3'-splice site. Regulates alternative splicing of tissue-specific exons and of differentially spliced exons during erythropoiesis. The protein is RNA binding protein fox-1 homolog 1 (RBFOX1) of Pongo abelii (Sumatran orangutan).